A 234-amino-acid polypeptide reads, in one-letter code: tRNA1(Val) (adenine(37)-N6)-methyltransferase (234 aa).

Belongs to the methyltransferase superfamily. tRNA (adenine-N(6)-)-methyltransferase family.

It is found in the cytoplasm. It carries out the reaction adenosine(37) in tRNA1(Val) + S-adenosyl-L-methionine = N(6)-methyladenosine(37) in tRNA1(Val) + S-adenosyl-L-homocysteine + H(+). Specifically methylates the adenine in position 37 of tRNA(1)(Val) (anticodon cmo5UAC). This chain is tRNA1(Val) (adenine(37)-N6)-methyltransferase, found in Flavobacterium psychrophilum (strain ATCC 49511 / DSM 21280 / CIP 103535 / JIP02/86).